The chain runs to 667 residues: MIKQQIEELRQLLRHHEYQYHVLDNPQIPDSEYDRLFHQLKALEQQYPEYASENSPTQRVGAKPLSNFAQVKHDIPMLSLDNAFSDEDFFAFVKRIQDRLIHVHHSLTFCCEPKLDGLAVSILYINGQLVQAATRGDGTTGEDITANIRTIRNIPLQLLTDNPPTRLEVRGEVFMSQAGFEKLNKTALAKGEKTFANPRNAAAGSLRQLDPKITGQRPLMLNAYGIGIAEGVELPDTHFARLQWLKSIGIPVNNEIQLCHGIEKVLDFYRTIKQKRSSLGYDIDGTVLKINDIDLQQQLGFISKAPRWAIAYKFPAQEELTILNNVEFQVGRTGAITPVAKLEPVFVAGVTVSNATLHNGDEIARLDIAIGDTVIVRRAGDVIPQIIGVLHERRPENAKSIIFPTNCPVCDSVISKIEGEAVARCTGGLICAAQRKEALKHFVSRKAMDIDGIGAKLIEQLVERELVHTPADLFKLDQVTLMRLERMGAKSAENALASLAKAKKTTLARFIFALGIREVGETTALNLATHFKTLEAFENATFEQLQKVQDVGEVVAKRIRSFWSEPHNVAVVKDLIAQGIHWDNVEVKEVRDNPLKGKTVVLTGTLTKMGRSEAKEYLLQLGCKVSGSVSSKTDFVIAGESAGSKLTKATELGINILSENEFLALLA.

NAD(+) is bound by residues 30-34 (DSEYD), 79-80 (SL), and glutamate 112. Residue lysine 114 is the N6-AMP-lysine intermediate of the active site. Arginine 135, glutamate 172, lysine 289, and lysine 313 together coordinate NAD(+). Zn(2+) is bound by residues cysteine 407, cysteine 410, cysteine 425, and cysteine 431. One can recognise a BRCT domain in the interval 590–667 (VRDNPLKGKT…SENEFLALLA (78 aa)).

Belongs to the NAD-dependent DNA ligase family. LigA subfamily. Mg(2+) serves as cofactor. It depends on Mn(2+) as a cofactor.

The catalysed reaction is NAD(+) + (deoxyribonucleotide)n-3'-hydroxyl + 5'-phospho-(deoxyribonucleotide)m = (deoxyribonucleotide)n+m + AMP + beta-nicotinamide D-nucleotide.. In terms of biological role, DNA ligase that catalyzes the formation of phosphodiester linkages between 5'-phosphoryl and 3'-hydroxyl groups in double-stranded DNA using NAD as a coenzyme and as the energy source for the reaction. It is essential for DNA replication and repair of damaged DNA. This chain is DNA ligase, found in Histophilus somni (strain 2336) (Haemophilus somnus).